Here is a 134-residue protein sequence, read N- to C-terminus: Large ribosomal subunit protein bL17 (134 aa).

It belongs to the bacterial ribosomal protein bL17 family. As to quaternary structure, part of the 50S ribosomal subunit. Contacts protein L32.

This chain is Large ribosomal subunit protein bL17, found in Thioalkalivibrio sulfidiphilus (strain HL-EbGR7).